The sequence spans 243 residues: GrpE protein homolog, mitochondrial (243 aa).

The segment at 42–75 (TEASKKEGKEDKAEAQGSQEPETAAETNKEAEGA) is disordered. Basic and acidic residues predominate over residues 44-55 (ASKKEGKEDKAE).

The protein belongs to the GrpE family. In terms of assembly, component of the PAM complex, at least composed of mtHsp70, MGE1, TIM44, PAM16, PAM17 and PAM18.

It localises to the mitochondrion matrix. Essential component of the PAM complex, a complex required for the translocation of transit peptide-containing proteins from the inner membrane into the mitochondrial matrix in an ATP-dependent manner. Seems to control the nucleotide-dependent binding of SSC1 to substrate proteins. This chain is GrpE protein homolog, mitochondrial (mge1), found in Debaryomyces hansenii (strain ATCC 36239 / CBS 767 / BCRC 21394 / JCM 1990 / NBRC 0083 / IGC 2968) (Yeast).